We begin with the raw amino-acid sequence, 470 residues long: Putative multidrug resistance protein MdtD (470 aa).

Residues 1–11 (MTELPDNTRWQ) are Periplasmic-facing. The helical transmembrane segment at 12–32 (LWIVAFGFFMQSLDTTIVNTA) threads the bilayer. The Cytoplasmic segment spans residues 33–48 (LPSMAKSLGESPLHMH). A helical membrane pass occupies residues 49–69 (MVVVSYVLTVAVMLPASGWLA). Residues 70–76 (DKIGVRN) are Periplasmic-facing. Residues 77-97 (IFFAAIVLFTLGSLFCALSGT) form a helical membrane-spanning segment. Residues 98-101 (LNQL) lie on the Cytoplasmic side of the membrane. A helical transmembrane segment spans residues 102-124 (VLARVLQGVGGAMMVPVGRLTVM). Residues 125–137 (KIVPRTQYMAAMT) are Periplasmic-facing. Residues 138–158 (FVTLPGQIGPLLGPALGGVLV) traverse the membrane as a helical segment. Residues 159 to 164 (EYASWH) are Cytoplasmic-facing. A helical transmembrane segment spans residues 165–185 (WIFLINIPVGIVGAMATFMLM). Residues 186-196 (PNYTIETRRFD) are Periplasmic-facing. The chain crosses the membrane as a helical span at residues 197–217 (LPGFLLLAIGMAVLTLALDGS). The Cytoplasmic segment spans residues 218 to 224 (KSMGISP). The helical transmembrane segment at 225 to 245 (WTLAGLAAGGAAAILLYLFHA) threads the bilayer. Topologically, residues 246–262 (KKNSGALFSLRLFRTPT) are periplasmic. The chain crosses the membrane as a helical span at residues 263-283 (FSLGLLGSFAGRIGSGMLPFM). Topologically, residues 284-285 (TP) are cytoplasmic. The helical transmembrane segment at 286-306 (VFLQIGLGFSPFHAGLMMIPM) threads the bilayer. The Periplasmic segment spans residues 307–341 (VLGSMGMKRIVVQIVNRFGYRRVLVATTLGLALVS). Residues 342–362 (LLFMSVALLGWYYLLPLVLLL) form a helical membrane-spanning segment. Over 363–395 (QGMVNSARFSSMNTLTLKDLPDTLASSGNSLLS) the chain is Cytoplasmic. A helical transmembrane segment spans residues 396–416 (MIMQLSMSIGVTIAGMLLGMF). At 417-430 (GQQHIGIDSSATHH) the chain is on the periplasmic side. A helical membrane pass occupies residues 431 to 451 (VFMYTWLCMAVIIALPAIIFA). Residues 452 to 470 (RVPNDTQQNMVISRRKRSL) lie on the Cytoplasmic side of the membrane.

Belongs to the major facilitator superfamily. TCR/Tet family.

It localises to the cell inner membrane. The polypeptide is Putative multidrug resistance protein MdtD (Salmonella dublin (strain CT_02021853)).